The sequence spans 486 residues: Cardiolipin synthase A (486 aa).

The next 2 membrane-spanning stretches (helical) occupy residues 3-23 (TFYT…IAGV) and 38-58 (MTWL…YFAF). PLD phosphodiesterase domains are found at residues 219-246 (MDLR…VDPR) and 399-426 (EDGL…DMRS). Catalysis depends on residues His224, Lys226, Asp231, His404, Lys406, and Asp411.

The protein belongs to the phospholipase D family. Cardiolipin synthase subfamily. ClsA sub-subfamily.

It is found in the cell inner membrane. The catalysed reaction is 2 a 1,2-diacyl-sn-glycero-3-phospho-(1'-sn-glycerol) = a cardiolipin + glycerol. Catalyzes the reversible phosphatidyl group transfer from one phosphatidylglycerol molecule to another to form cardiolipin (CL) (diphosphatidylglycerol) and glycerol. The polypeptide is Cardiolipin synthase A (Proteus mirabilis (strain HI4320)).